Reading from the N-terminus, the 201-residue chain is MQTSPLLETLMESLRCLPGVGPKSAQRMAFQLLQRDRSGGMRLAQALTRAMSEIGHCADCRTFTEQEICTICANPRRQHNGLICVVESPADIHAIEQTGQFSGRYFVLMGHLSPLDGIGPGDIGLDRLEQRLETESIQEVILATNPTVEGEATANYIASLCEQYGVDASRIAHGVPVGGELEMVDGTTLSHSLAGRQKFKF.

The C4-type zinc finger occupies 57–72 (CADCRTFTEQEICTIC). The Toprim domain maps to 81–176 (GLICVVESPA…DASRIAHGVP (96 aa)).

The protein belongs to the RecR family.

Functionally, may play a role in DNA repair. It seems to be involved in an RecBC-independent recombinational process of DNA repair. It may act with RecF and RecO. The polypeptide is Recombination protein RecR (Erwinia tasmaniensis (strain DSM 17950 / CFBP 7177 / CIP 109463 / NCPPB 4357 / Et1/99)).